The primary structure comprises 242 residues: 1-(5-phosphoribosyl)-5-[(5-phosphoribosylamino)methylideneamino] imidazole-4-carboxamide isomerase (242 aa).

D8 functions as the Proton acceptor in the catalytic mechanism. Catalysis depends on D129, which acts as the Proton donor.

It belongs to the HisA/HisF family.

The protein resides in the cytoplasm. It carries out the reaction 1-(5-phospho-beta-D-ribosyl)-5-[(5-phospho-beta-D-ribosylamino)methylideneamino]imidazole-4-carboxamide = 5-[(5-phospho-1-deoxy-D-ribulos-1-ylimino)methylamino]-1-(5-phospho-beta-D-ribosyl)imidazole-4-carboxamide. Its pathway is amino-acid biosynthesis; L-histidine biosynthesis; L-histidine from 5-phospho-alpha-D-ribose 1-diphosphate: step 4/9. The sequence is that of 1-(5-phosphoribosyl)-5-[(5-phosphoribosylamino)methylideneamino] imidazole-4-carboxamide isomerase from Maridesulfovibrio salexigens (strain ATCC 14822 / DSM 2638 / NCIMB 8403 / VKM B-1763) (Desulfovibrio salexigens).